We begin with the raw amino-acid sequence, 261 residues long: Carnitinyl-CoA dehydratase (261 aa).

Catalysis depends on Glu111, which acts as the Nucleophile. Catalysis depends on Glu131, which acts as the Proton acceptor.

The protein belongs to the enoyl-CoA hydratase/isomerase family.

The enzyme catalyses (R)-carnitinyl-CoA = crotonobetainyl-CoA + H2O. The protein operates within amine and polyamine metabolism; carnitine metabolism. Its function is as follows. Catalyzes the reversible dehydration of L-carnitinyl-CoA to crotonobetainyl-CoA. The chain is Carnitinyl-CoA dehydratase from Escherichia coli O157:H7.